Here is a 61-residue protein sequence, read N- to C-terminus: Weak toxin CM-2a (61 aa).

4 disulfide bridges follow: C3–C19, C12–C37, C41–C49, and C50–C55.

This sequence belongs to the three-finger toxin family. Short-chain subfamily. Orphan group XX sub-subfamily. In terms of tissue distribution, expressed by the venom gland.

The protein resides in the secreted. The chain is Weak toxin CM-2a from Naja annulifera (Banded Egyptian cobra).